Here is a 90-residue protein sequence, read N- to C-terminus: DNA-binding protein HU (90 aa).

T4 bears the Phosphothreonine mark. Residues 56–90 (AARKGRNPQTGEEMEIPASKVPAFKPGKALKDAVK) form a disordered region.

This sequence belongs to the bacterial histone-like protein family. Homodimer.

Functionally, histone-like DNA-binding protein which is capable of wrapping DNA to stabilize it, and thus to prevent its denaturation under extreme environmental conditions. This chain is DNA-binding protein HU (hup), found in Geobacillus stearothermophilus (Bacillus stearothermophilus).